The following is an 87-amino-acid chain: U15-lycotoxin-Ls1h (87 aa).

An N-terminal signal peptide occupies residues 1–20 (MNSKIFAVLLLLGLLSCVLS). Positions 21 to 66 (DQYCPKSSITACKKMNTRNDCCKDDDCTGGSWCCATPCGNFCKYPT) constitute a WAP domain. Intrachain disulfides connect Cys24/Cys54, Cys32/Cys58, Cys41/Cys53, Cys42/Cys80, and Cys47/Cys62.

Belongs to the venom protein 11 family. 01 (wap-1) subfamily. Contains 5 disulfide bonds. In terms of tissue distribution, expressed by the venom gland.

It localises to the secreted. In terms of biological role, has antibacterial activity. The polypeptide is U15-lycotoxin-Ls1h (Lycosa singoriensis (Wolf spider)).